Reading from the N-terminus, the 129-residue chain is Protein Turandot C (129 aa).

The first 21 residues, 1-21, serve as a signal peptide directing secretion; that stretch reads MNASISLLCFALLLISPFCLG.

The protein belongs to the Turandot family.

Its subcellular location is the secreted. In terms of biological role, a humoral factor that may play a role in stress tolerance. This chain is Protein Turandot C, found in Drosophila sechellia (Fruit fly).